The following is a 219-amino-acid chain: 2-C-methyl-D-erythritol 4-phosphate cytidylyltransferase (219 aa).

This sequence belongs to the IspD/TarI cytidylyltransferase family. IspD subfamily.

The enzyme catalyses 2-C-methyl-D-erythritol 4-phosphate + CTP + H(+) = 4-CDP-2-C-methyl-D-erythritol + diphosphate. Its pathway is isoprenoid biosynthesis; isopentenyl diphosphate biosynthesis via DXP pathway; isopentenyl diphosphate from 1-deoxy-D-xylulose 5-phosphate: step 2/6. Functionally, catalyzes the formation of 4-diphosphocytidyl-2-C-methyl-D-erythritol from CTP and 2-C-methyl-D-erythritol 4-phosphate (MEP). This is 2-C-methyl-D-erythritol 4-phosphate cytidylyltransferase from Phocaeicola vulgatus (strain ATCC 8482 / DSM 1447 / JCM 5826 / CCUG 4940 / NBRC 14291 / NCTC 11154) (Bacteroides vulgatus).